Here is an 886-residue protein sequence, read N- to C-terminus: Conserved oligomeric Golgi complex subunit 1 (886 aa).

Over residues 834–846 (SAERKSPIQEPVE) the composition is skewed to basic and acidic residues. Residues 834 to 886 (SAERKSPIQEPVEKTATTTPTRKSGGNGARKGDSSKSKSSAASFFGMSQEWFR) form a disordered region. The residue at position 839 (Ser839) is a Phosphoserine. Polar residues predominate over residues 848–857 (TATTTPTRKS).

This sequence belongs to the COG1 family. As to quaternary structure, component of the conserved oligomeric Golgi complex which is composed of eight different subunits and is required for normal Golgi morphology and localization.

The protein localises to the golgi apparatus membrane. Its function is as follows. Required for normal Golgi function. This Drosophila melanogaster (Fruit fly) protein is Conserved oligomeric Golgi complex subunit 1.